An 879-amino-acid chain; its full sequence is MMFYRLLSIVGRQRASPGWQNWSSARNSTSAAEARSMALPTQAQVVICGGGITGTSVAYHLSKMGWKDIVLLEQGRLAAGSTRFCAGILSTARHLTIEQKMADYSNKLYYQLEQETGIQTGYTRTGSIFLAQTQDRLISLKRINAGLNVIGIPSEIISPKKVAELHHLLNVHDLVGAMHVPEDAVVSSADVALALASAASQNGVQIYDRTSVLHVMVKKGQVTGVETDKGQIECQYFVNCAGQWAYELGLSNEEPVSIPLHACEHFYLLTRPLETPLQSSTPTIVDADGRIYIRNWQGGILSGGFEKNPKPIFTEGKNQLEIQNLQEDWDHFEPLLSSLLRRMPELETLEIMKLVNCPETFTPDMRCIMGESPAVQGYFVLAGMNSAGLSFGGGAGKYLAEWMVHGYPSENVWELDLKRFGALQSSRTFLRHRVMEVMPLMYDLKVPRWDFQTGRQLRTSPLYDRLDAQGARWMEKHGFERPKYFVPPDKDLLALEQSKTFYKPDWFDIVESEVKCCKEAVCVIDMSSFTKFEITSTGDQALEVLQYLFSNDLDVPVGHIVHTGMLNEGGGYENDCSIARLNKRSFFMISPTDQQVHCWAWLKKHMPKDSNLLLEDVTWKYTALNLIGPRAVDVLSELSYAPMTPDHFPSLFCKEMSVGYANGIRVMSMTHTGEPGFMLYIPIEYALHVYNEVMSVGQKYGIRNAGYYALRSLRIEKFFAFWGQDINNLTTPLECGRESRVKLEKGMDFIGRDALLQQKQNGVYKRLTMFILDDHDSDLDLWPWWGEPIYRNGQYVGKTTSSAYSYSLERHVCLGFVHNFSEDTGEEQVVTADFINRGEYEIDIAGYRFQAKAKLYPVASLFTQKRRKDDMELSDLHGK.

The transit peptide at 1–27 directs the protein to the mitochondrion; it reads MMFYRLLSIVGRQRASPGWQNWSSARN.

It belongs to the GcvT family. As to quaternary structure, heterodimer of a catalytic (PDP1) and a regulatory (PDPR) subunit.

It localises to the mitochondrion matrix. Functionally, decreases the sensitivity of PDP1 to magnesium ions, and this inhibition is reversed by the polyamine spermine. The polypeptide is Pyruvate dehydrogenase phosphatase regulatory subunit, mitochondrial (PDPR) (Homo sapiens (Human)).